The following is a 353-amino-acid chain: Aromatic amino acid aminotransferase (353 aa).

Lys-217 is modified (N6-(pyridoxal phosphate)lysine).

This sequence belongs to the class-II pyridoxal-phosphate-dependent aminotransferase family. In terms of assembly, homodimer. Pyridoxal 5'-phosphate is required as a cofactor.

The enzyme catalyses an aromatic L-alpha-amino acid + 2-oxoglutarate = an aromatic oxo-acid + L-glutamate. Aminotransferase that catalyzes the conversion of aromatic amino acids and 2-oxoglutarate into corresponding aromatic oxo acids and L-glutamate. The chain is Aromatic amino acid aminotransferase from Mycobacterium bovis (strain ATCC BAA-935 / AF2122/97).